The sequence spans 432 residues: Maltoporin (432 aa).

Residues 1-22 (MKKVSVIAAAVAATLAAGSAFA) form the signal peptide.

This sequence belongs to the porin LamB (TC 1.B.3) family. In terms of assembly, homotrimer formed of three 18-stranded antiparallel beta-barrels, containing three independent channels.

The protein resides in the cell outer membrane. It catalyses the reaction beta-maltose(in) = beta-maltose(out). Its function is as follows. Involved in the transport of maltose and maltodextrins. This is Maltoporin from Vibrio parahaemolyticus serotype O3:K6 (strain RIMD 2210633).